We begin with the raw amino-acid sequence, 181 residues long: Thymidine kinase (181 aa).

ATP is bound at residue 13–20 (GPMFSGKS). The active-site Proton acceptor is E85. F115 is a binding site for substrate. Zn(2+) contacts are provided by C140 and C143. Substrate is bound at residue 159 to 163 (IEIIG). Zn(2+) is bound by residues C172 and C175.

This sequence belongs to the thymidine kinase family.

The catalysed reaction is thymidine + ATP = dTMP + ADP + H(+). In Yaba monkey tumor virus (strain VR587) (YMTV), this protein is Thymidine kinase (TK).